Reading from the N-terminus, the 151-residue chain is Large ribosomal subunit protein bL9 (151 aa).

It belongs to the bacterial ribosomal protein bL9 family.

In terms of biological role, binds to the 23S rRNA. The protein is Large ribosomal subunit protein bL9 of Mycolicibacterium gilvum (strain PYR-GCK) (Mycobacterium gilvum (strain PYR-GCK)).